A 124-amino-acid chain; its full sequence is Large ribosomal subunit protein bL12 (124 aa).

This sequence belongs to the bacterial ribosomal protein bL12 family. Homodimer. Part of the ribosomal stalk of the 50S ribosomal subunit. Forms a multimeric L10(L12)X complex, where L10 forms an elongated spine to which 2 to 4 L12 dimers bind in a sequential fashion. Binds GTP-bound translation factors.

In terms of biological role, forms part of the ribosomal stalk which helps the ribosome interact with GTP-bound translation factors. Is thus essential for accurate translation. The sequence is that of Large ribosomal subunit protein bL12 from Cupriavidus metallidurans (strain ATCC 43123 / DSM 2839 / NBRC 102507 / CH34) (Ralstonia metallidurans).